The primary structure comprises 387 residues: MNAKTDFSGYEVGYDIPALPGMDESEIQTPCLILDLDALERNIRKMGDYAKAHGMRHRSHGKMHKSVDVQKLQESLGGSVGVCCQKVSEAEAFARGGIKDVLVTNEVREPAKIDRLARLPKTGATVTVCVDDVQNIADLSAAAQKHGTELGIFVEIDCGAGRCGVTTKEAVVEIAKAAAAAPNLTFKGIQAYQGAMQHMDSFEDRKAKLDAAIAQVKEAVDALEAEGLAPEFVSGGGTGSYYFESNSGIYNELQCGSYAFMDADYGRIHDAEGKRIDQGEWENALFILTSVMSHAKPHLAVVDAGLKAQSVDSGLPFVYGRDDVKYIKCSDEHGVVEDKDGVLKVNDKLRLVPGHCDPTCNVHDWYVGVRNGKVETVWPVSARGKGY.

Lys62 carries the post-translational modification N6-(pyridoxal phosphate)lysine. Pyridoxal 5'-phosphate-binding positions include Gln85, Thr238, 256–257 (GS), and Tyr265. 2 residues coordinate Mg(2+): His355 and Asp357.

The protein belongs to the DSD1 family. As to quaternary structure, homodimer. It depends on pyridoxal 5'-phosphate as a cofactor. The cofactor is Mg(2+).

It catalyses the reaction (3S)-3-hydroxy-D-aspartate = glyoxylate + glycine. The catalysed reaction is (3R)-3-hydroxy-D-aspartate = glyoxylate + glycine. Its function is as follows. Catalyzes the condensation of glyoxylate and glycine into (2R,3S)-beta-hydroxyaspartate ((3S)-3-hydroxy-D-aspartate). Is essential for the growth of P.denitrificans in the presence of glycolate and glyoxylate since it functions in glyoxylate assimilation via the beta-hydroxyaspartate cycle (BHAC). Is also able to catalyze the reverse reaction in vitro, i.e. the cleavage of (3S)-3-hydroxy-D-aspartate, and that of D-threonine to a lesser extent. The protein is 3-hydroxy-D-aspartate aldolase of Paracoccus denitrificans (strain Pd 1222).